The sequence spans 206 residues: Small ribosomal subunit protein uS4 (206 aa).

An S4 RNA-binding domain is found at 96–156 (GRLDNVVYRM…EKAKKQSRVK (61 aa)).

Belongs to the universal ribosomal protein uS4 family. As to quaternary structure, part of the 30S ribosomal subunit. Contacts protein S5. The interaction surface between S4 and S5 is involved in control of translational fidelity.

One of the primary rRNA binding proteins, it binds directly to 16S rRNA where it nucleates assembly of the body of the 30S subunit. In terms of biological role, with S5 and S12 plays an important role in translational accuracy. This is Small ribosomal subunit protein uS4 from Escherichia fergusonii (strain ATCC 35469 / DSM 13698 / CCUG 18766 / IAM 14443 / JCM 21226 / LMG 7866 / NBRC 102419 / NCTC 12128 / CDC 0568-73).